The sequence spans 267 residues: 5'-nucleotidase SurE (267 aa).

A divalent metal cation is bound by residues Asp14, Asp15, Ser45, and Asn100.

The protein belongs to the SurE nucleotidase family. A divalent metal cation serves as cofactor.

It localises to the cytoplasm. It carries out the reaction a ribonucleoside 5'-phosphate + H2O = a ribonucleoside + phosphate. Nucleotidase that shows phosphatase activity on nucleoside 5'-monophosphates. This is 5'-nucleotidase SurE from Methanosarcina acetivorans (strain ATCC 35395 / DSM 2834 / JCM 12185 / C2A).